The following is a 226-amino-acid chain: 3-isopropylmalate dehydratase small subunit (226 aa).

The disordered stretch occupies residues 204-226; it reads EAETVESAREPEAVEWAGPLADR.

The protein belongs to the LeuD family. LeuD type 1 subfamily. As to quaternary structure, heterodimer of LeuC and LeuD.

The catalysed reaction is (2R,3S)-3-isopropylmalate = (2S)-2-isopropylmalate. It functions in the pathway amino-acid biosynthesis; L-leucine biosynthesis; L-leucine from 3-methyl-2-oxobutanoate: step 2/4. Catalyzes the isomerization between 2-isopropylmalate and 3-isopropylmalate, via the formation of 2-isopropylmaleate. The chain is 3-isopropylmalate dehydratase small subunit from Bifidobacterium animalis subsp. lactis (strain AD011).